The following is a 158-amino-acid chain: SsrA-binding protein (158 aa).

Belongs to the SmpB family.

The protein localises to the cytoplasm. Functionally, required for rescue of stalled ribosomes mediated by trans-translation. Binds to transfer-messenger RNA (tmRNA), required for stable association of tmRNA with ribosomes. tmRNA and SmpB together mimic tRNA shape, replacing the anticodon stem-loop with SmpB. tmRNA is encoded by the ssrA gene; the 2 termini fold to resemble tRNA(Ala) and it encodes a 'tag peptide', a short internal open reading frame. During trans-translation Ala-aminoacylated tmRNA acts like a tRNA, entering the A-site of stalled ribosomes, displacing the stalled mRNA. The ribosome then switches to translate the ORF on the tmRNA; the nascent peptide is terminated with the 'tag peptide' encoded by the tmRNA and targeted for degradation. The ribosome is freed to recommence translation, which seems to be the essential function of trans-translation. The chain is SsrA-binding protein from Parafrankia sp. (strain EAN1pec).